The following is a 442-amino-acid chain: MPLPIFPSRLQCSSSSSSSSSRSSFFRPKLRIDPSLTLIPGLSNDVGRLILSFVPYPHISRIKSTCKSWYAFLSSKTLISLRHSRDNSNTNNLSHLLCIFPQDPSISPPFLFDPVTLSWRSLPLMPCNPHVYGLCNFVAVALGPYVYVLGGSAFDTRSYPLDVPLPTSSVFRYSFVKSVWERLSPMMSPRGSFACAAMPGSCGRIIVAGGGSRHTLFGAAGSRMSSVEMYDVEKDEWRVMNELPRFRAGCVGFLVENEKEKEKEEEGREFWVMGGYGGSRTVSGILPVDEYYKDAVVMDLRVDGGEKWRVVGDMWGEEERPKLGKIVAVDCGKPVFFMLDKDWILRYEMGLNRWRKESSVPKKAHYDKPVGFVALNGELHVMILLDGYNLMDTRHTRQQRKAGSLMIHMYDPKKKTWRSVVSKPPFNHQLDFRTTVMCTIRL.

The region spanning 37–84 is the F-box domain; that stretch reads TLIPGLSNDVGRLILSFVPYPHISRIKSTCKSWYAFLSSKTLISLRHS. Kelch repeat units lie at residues 93–139, 145–200, 204–257, 269–328, 330–377, and 390–437; these read LSHL…NFVA, YVYV…AMPG, RIIV…LVEN, EFWV…KIVA, DCGK…ALNG, and LMDT…TTVM.

The chain is F-box/kelch-repeat protein OR23 (OR23) from Arabidopsis thaliana (Mouse-ear cress).